Consider the following 306-residue polypeptide: Elongation factor Ts (306 aa).

Residues 79–82 (TDFV) are involved in Mg(2+) ion dislocation from EF-Tu.

It belongs to the EF-Ts family.

The protein resides in the cytoplasm. In terms of biological role, associates with the EF-Tu.GDP complex and induces the exchange of GDP to GTP. It remains bound to the aminoacyl-tRNA.EF-Tu.GTP complex up to the GTP hydrolysis stage on the ribosome. The polypeptide is Elongation factor Ts (Mesorhizobium japonicum (strain LMG 29417 / CECT 9101 / MAFF 303099) (Mesorhizobium loti (strain MAFF 303099))).